A 610-amino-acid chain; its full sequence is MNSQDLKKRQEKIRNFSIIAHIDHGKSTLADRILEKTETVSSREMQAQLLDSMDLERERGITIKLNAIELNYTAKDGETYIFHLIDTPGHVDFTYEVSRSLAACEGAILVVDAAQGIEAQTLANVYLALDNDLEILPVINKIDLPAADPERVRHEVEDVIGLDASEAVLASAKAGIGIEEILEQIVEKVPAPTGDVDAPLQALIFDSVYDAYRGVILQVRIVNGIVKPGDKIQMMSNGKTFDVTEVGIFTPKAVGRDFLATGDVGYVAASIKTVADTRVGDTVTLANNPAKEALHGYKQMNPMVFAGIYPIESNKYNDLREALEKLQLNDASLQFEPETSQALGFGFRCGFLGLLHMDVIQERLEREFNIDLIMTAPSVVYHVHTTDEDMIEVSNPSEFPDPTRVAFIEEPYVKAQIMVPQEFVGAVMELSQRKRGDFVTMDYIDDNRVNVIYQIPLAEIVFDFFDKLKSSTRGYASFDYDMSEYRRSQLVKMDILLNGDKVDALSFIVHKEFAYERGKIIVEKLKKIIPRQQFEVPIQAAIGQKIVARSDIKALRKNVLAKCYGGDVSRKRKLLEKQKAGKKRMKAIGSVEVPQEAFLSVLSMDDDTKK.

The region spanning 11–193 (EKIRNFSIIA…QIVEKVPAPT (183 aa)) is the tr-type G domain. GTP-binding positions include 23 to 28 (DHGKST) and 140 to 143 (NKID).

It belongs to the TRAFAC class translation factor GTPase superfamily. Classic translation factor GTPase family. LepA subfamily.

It localises to the cell membrane. The catalysed reaction is GTP + H2O = GDP + phosphate + H(+). Functionally, required for accurate and efficient protein synthesis under certain stress conditions. May act as a fidelity factor of the translation reaction, by catalyzing a one-codon backward translocation of tRNAs on improperly translocated ribosomes. Back-translocation proceeds from a post-translocation (POST) complex to a pre-translocation (PRE) complex, thus giving elongation factor G a second chance to translocate the tRNAs correctly. Binds to ribosomes in a GTP-dependent manner. This Streptococcus pyogenes serotype M1 protein is Elongation factor 4.